Here is a 556-residue protein sequence, read N- to C-terminus: Jerky protein homolog (556 aa).

In terms of domain architecture, HTH psq-type spans 11–62 (RGEKRKRVVLTLKEKIDICTRLEKGESRKALMQEYNVGMSTLYDIRAHKAQL). 2 DNA-binding regions (H-T-H motif) span residues 38–58 (RKALMQEYNVGMSTLYDIRAH) and 110–142 (PMLIEKAKDFYEQMQLTEPCVFSGGWLWRFKAR). An HTH CENPB-type domain is found at 77-149 (QRRTLHTPKL…KARHGIKKLD (73 aa)). The region spanning 213 to 382 (KDRLTVLMCA…VPSHVFRRAW (170 aa)) is the DDE-1 domain. Serine 414 is modified (phosphoserine). A disordered region spans residues 439–482 (SWGVAGREAEGGRPPAATSPAEVVWSSEKTPKADQDGRGDPGEG). A compositionally biased stretch (basic and acidic residues) spans 467–479 (KTPKADQDGRGDP).

The protein belongs to the tigger transposable element derived protein family. In terms of tissue distribution, expressed ubiquitously.

Its subcellular location is the nucleus. Functionally, may bind DNA. The chain is Jerky protein homolog from Homo sapiens (Human).